The sequence spans 133 residues: Lanmodulin (133 aa).

The N-terminal stretch at Met-1–Ala-21 is a signal peptide. Residues Asp-35, Asp-37, Asp-39, Thr-41, Glu-46, Asp-59, Asp-61, Asp-63, Thr-65, Glu-70, Asp-84, Asp-86, Asp-88, Thr-90, Glu-95, Asn-108, Asp-110, Asp-112, Thr-114, and Glu-119 each coordinate Nd(3+). EF-hand domains are found at residues Asp-35–Glu-46, Asp-59–Glu-70, Asp-84–Glu-95, and Asn-108–Glu-119.

As to quaternary structure, monomer.

It is found in the periplasm. In terms of biological role, high-affinity lanthanide (Ln)-binding protein. Shows 100 million-fold selectivity for La(3+) over Ca(2+). Binds 3 equiv of Ln(3+) with picomolar affinity and a fourth with approximately micromolar affinity. May be involved in receiving and then transporting lanthanides (such as La(3+), Nd(3+) and Sm(3+)) to a specific periplasmic destination. This is Lanmodulin from Methylorubrum extorquens (strain ATCC 14718 / DSM 1338 / JCM 2805 / NCIMB 9133 / AM1) (Methylobacterium extorquens).